Here is a 549-residue protein sequence, read N- to C-terminus: Glucose-6-phosphate isomerase (549 aa).

The Proton donor role is filled by E355. Residues H386 and K514 contribute to the active site.

This sequence belongs to the GPI family.

The protein localises to the cytoplasm. The catalysed reaction is alpha-D-glucose 6-phosphate = beta-D-fructose 6-phosphate. The protein operates within carbohydrate biosynthesis; gluconeogenesis. Its pathway is carbohydrate degradation; glycolysis; D-glyceraldehyde 3-phosphate and glycerone phosphate from D-glucose: step 2/4. In terms of biological role, catalyzes the reversible isomerization of glucose-6-phosphate to fructose-6-phosphate. The polypeptide is Glucose-6-phosphate isomerase (Enterobacter sp. (strain 638)).